Consider the following 1377-residue polypeptide: DNA-directed RNA polymerase subunit beta'' (1377 aa).

Residues C224, C294, C301, and C304 each contribute to the Zn(2+) site.

Belongs to the RNA polymerase beta' chain family. RpoC2 subfamily. In terms of assembly, in plastids the minimal PEP RNA polymerase catalytic core is composed of four subunits: alpha, beta, beta', and beta''. When a (nuclear-encoded) sigma factor is associated with the core the holoenzyme is formed, which can initiate transcription. Requires Zn(2+) as cofactor.

The protein resides in the plastid. It localises to the chloroplast. The enzyme catalyses RNA(n) + a ribonucleoside 5'-triphosphate = RNA(n+1) + diphosphate. Functionally, DNA-dependent RNA polymerase catalyzes the transcription of DNA into RNA using the four ribonucleoside triphosphates as substrates. The polypeptide is DNA-directed RNA polymerase subunit beta'' (Calycanthus floridus var. glaucus (Eastern sweetshrub)).